The sequence spans 674 residues: Methionine--tRNA ligase (674 aa).

Positions 11–21 (PYANGDLHLGH) match the 'HIGH' region motif. Zn(2+) is bound by residues Cys142, Cys145, Cys155, and Cys158. The 'KMSKS' region motif lies at 330 to 334 (KMSKS). Residue Lys333 coordinates ATP. Residues 574 to 674 (DFMKVDLRIA…EGAQPGMRVK (101 aa)) form the tRNA-binding domain.

This sequence belongs to the class-I aminoacyl-tRNA synthetase family. MetG type 1 subfamily. As to quaternary structure, homodimer. Requires Zn(2+) as cofactor.

It localises to the cytoplasm. It catalyses the reaction tRNA(Met) + L-methionine + ATP = L-methionyl-tRNA(Met) + AMP + diphosphate. Functionally, is required not only for elongation of protein synthesis but also for the initiation of all mRNA translation through initiator tRNA(fMet) aminoacylation. The sequence is that of Methionine--tRNA ligase from Francisella tularensis subsp. tularensis (strain WY96-3418).